A 66-amino-acid chain; its full sequence is Large ribosomal subunit protein bL33c (66 aa).

Belongs to the bacterial ribosomal protein bL33 family.

It is found in the plastid. The protein resides in the chloroplast. This is Large ribosomal subunit protein bL33c from Glycine max (Soybean).